The following is a 54-amino-acid chain: MSKKSTPMTKDAASRIQSSAAKSGGDVSSGSFASRAQSAAAINANNTSNSTGKK.

The tract at residues 1 to 54 is disordered; that stretch reads MSKKSTPMTKDAASRIQSSAAKSGGDVSSGSFASRAQSAAAINANNTSNSTGKK. The segment covering 28-54 has biased composition (low complexity); that stretch reads SSGSFASRAQSAAAINANNTSNSTGKK.

This is an uncharacterized protein from Dictyostelium discoideum (Social amoeba).